A 126-amino-acid polypeptide reads, in one-letter code: Large ribosomal subunit protein bL20c (126 aa).

The protein belongs to the bacterial ribosomal protein bL20 family.

The protein resides in the plastid. The protein localises to the chloroplast. Binds directly to 23S ribosomal RNA and is necessary for the in vitro assembly process of the 50S ribosomal subunit. It is not involved in the protein synthesizing functions of that subunit. This is Large ribosomal subunit protein bL20c from Pelargonium hortorum (Common geranium).